The sequence spans 243 residues: 3-deoxy-manno-octulosonate cytidylyltransferase (243 aa).

Belongs to the KdsB family.

Its subcellular location is the cytoplasm. It carries out the reaction 3-deoxy-alpha-D-manno-oct-2-ulosonate + CTP = CMP-3-deoxy-beta-D-manno-octulosonate + diphosphate. It participates in nucleotide-sugar biosynthesis; CMP-3-deoxy-D-manno-octulosonate biosynthesis; CMP-3-deoxy-D-manno-octulosonate from 3-deoxy-D-manno-octulosonate and CTP: step 1/1. The protein operates within bacterial outer membrane biogenesis; lipopolysaccharide biosynthesis. In terms of biological role, activates KDO (a required 8-carbon sugar) for incorporation into bacterial lipopolysaccharide in Gram-negative bacteria. The polypeptide is 3-deoxy-manno-octulosonate cytidylyltransferase (Helicobacter pylori (strain HPAG1)).